Reading from the N-terminus, the 606-residue chain is Elongation factor 4 (606 aa).

A tr-type G domain is found at 7–189 (SRIRNFCIIA…AVVDRVPPPK (183 aa)). Residues 19-24 (DHGKST) and 136-139 (NKID) each bind GTP.

It belongs to the TRAFAC class translation factor GTPase superfamily. Classic translation factor GTPase family. LepA subfamily.

The protein localises to the cell inner membrane. It catalyses the reaction GTP + H2O = GDP + phosphate + H(+). In terms of biological role, required for accurate and efficient protein synthesis under certain stress conditions. May act as a fidelity factor of the translation reaction, by catalyzing a one-codon backward translocation of tRNAs on improperly translocated ribosomes. Back-translocation proceeds from a post-translocation (POST) complex to a pre-translocation (PRE) complex, thus giving elongation factor G a second chance to translocate the tRNAs correctly. Binds to ribosomes in a GTP-dependent manner. The sequence is that of Elongation factor 4 from Synechococcus sp. (strain CC9605).